The sequence spans 853 residues: WEB family protein At5g16730, chloroplastic (853 aa).

Composition is skewed to low complexity over residues 1 to 27 and 36 to 49; these read MASK…PATP and KSET…STTT. A chloroplast-targeting transit peptide spans 1–84; sequence MASKTKTSLS…PTPPEKSQAR (84 aa). Disordered regions lie at residues 1 to 106, 386 to 465, 666 to 765, and 778 to 820; these read MASK…IKED, KEDL…SKKA, LAKK…SVEV, and KEAF…ALTA. Positions 92 to 101 are enriched in polar residues; sequence ESPQTTTRLS. A coiled-coil region spans residues 94–670; sequence PQTTTRLSQI…LEEAILAKKQ (577 aa). Composition is skewed to basic and acidic residues over residues 402–465, 698–718, and 732–753; these read EVSK…SKKA, NGHR…HEPP, and MEEK…KKDE. A compositionally biased stretch (acidic residues) spans 754 to 763; that stretch reads SQDDDKDDSV. The span at 778–788 shows a compositional bias: basic and acidic residues; that stretch reads KEAFPDKKSEL. Residue Ser-790 is modified to Phosphoserine. The span at 797 to 807 shows a compositional bias: basic and acidic residues; the sequence is SSKIDESDKTS.

Belongs to the WEB family.

Its subcellular location is the plastid. The protein localises to the chloroplast. This is WEB family protein At5g16730, chloroplastic from Arabidopsis thaliana (Mouse-ear cress).